We begin with the raw amino-acid sequence, 132 residues long: Phosphoribosyl-AMP cyclohydrolase (132 aa).

Mg(2+) is bound at residue Asp-76. Cys-77 lines the Zn(2+) pocket. Asp-78 and Asp-80 together coordinate Mg(2+). Zn(2+) is bound by residues Cys-93 and Cys-100.

This sequence belongs to the PRA-CH family. As to quaternary structure, homodimer. Requires Mg(2+) as cofactor. The cofactor is Zn(2+).

Its subcellular location is the cytoplasm. It carries out the reaction 1-(5-phospho-beta-D-ribosyl)-5'-AMP + H2O = 1-(5-phospho-beta-D-ribosyl)-5-[(5-phospho-beta-D-ribosylamino)methylideneamino]imidazole-4-carboxamide. Its pathway is amino-acid biosynthesis; L-histidine biosynthesis; L-histidine from 5-phospho-alpha-D-ribose 1-diphosphate: step 3/9. Catalyzes the hydrolysis of the adenine ring of phosphoribosyl-AMP. In Methanobrevibacter smithii (strain ATCC 35061 / DSM 861 / OCM 144 / PS), this protein is Phosphoribosyl-AMP cyclohydrolase.